The sequence spans 196 residues: Anthranilate synthase component 2 (196 aa).

The 193-residue stretch at 4–196 (LILIIDNYDS…RDILENFLRM (193 aa)) folds into the Glutamine amidotransferase type-1 domain. Position 60–62 (60–62 (GPG)) interacts with L-glutamine. The active-site Nucleophile; for GATase activity is Cys-89. Residues Gln-93 and 138 to 139 (SL) each bind L-glutamine. Active-site for GATase activity residues include His-177 and Glu-179.

Heterotetramer consisting of two non-identical subunits: a beta subunit (TrpG) and a large alpha subunit (TrpE).

It catalyses the reaction chorismate + L-glutamine = anthranilate + pyruvate + L-glutamate + H(+). It functions in the pathway amino-acid biosynthesis; L-tryptophan biosynthesis; L-tryptophan from chorismate: step 1/5. In terms of biological role, part of a heterotetrameric complex that catalyzes the two-step biosynthesis of anthranilate, an intermediate in the biosynthesis of L-tryptophan. In the first step, the glutamine-binding beta subunit (TrpG) of anthranilate synthase (AS) provides the glutamine amidotransferase activity which generates ammonia as a substrate that, along with chorismate, is used in the second step, catalyzed by the large alpha subunit of AS (TrpE) to produce anthranilate. In the absence of TrpG, TrpE can synthesize anthranilate directly from chorismate and high concentrations of ammonia. In Methanothermobacter marburgensis (strain ATCC BAA-927 / DSM 2133 / JCM 14651 / NBRC 100331 / OCM 82 / Marburg) (Methanobacterium thermoautotrophicum), this protein is Anthranilate synthase component 2 (trpG).